Consider the following 1453-residue polypeptide: ABC transporter G family member 34 (1453 aa).

The segment at 1 to 24 (MLGRDEDLVRTMSGRGSLGSTSHR) is disordered. The ABC transporter 1 domain occupies 173–446 (LGLFHLLPSK…FEYMGFKCPE (274 aa)). 206–213 (GPPSSGKT) contacts ATP. In terms of domain architecture, ABC transmembrane type-2 1 spans 524-737 (DLFKACFDRE…GQTALVINEF (214 aa)). Transmembrane regions (helical) follow at residues 542–562 (FVYV…MTVY), 582–602 (LFFS…FTVM), 621–641 (FALP…VIWI), 661–681 (LLAY…LGAL), 687–707 (IANS…GFII), and 773–793 (FWIC…CYII). One can recognise an ABC transporter 2 domain in the interval 852–1105 (LAFNNVNYYV…LVEYFEAIEG (254 aa)). 897-904 (GVSGAGKT) is a binding site for ATP. In terms of domain architecture, ABC transmembrane type-2 2 spans 1177-1391 (TQTKACFWKM…TLYGIITSQV (215 aa)). Helical transmembrane passes span 1196-1216 (YNAI…LLFW), 1230-1250 (NFFG…AATV), 1289-1309 (IQTG…WTVV), 1311-1331 (FFWF…YGMM), 1341-1361 (IAGI…GFLI), 1366-1386 (IPIW…LYGI), and 1422-1442 (FLPV…FAFA).

This sequence belongs to the ABC transporter superfamily. ABCG family. PDR (TC 3.A.1.205) subfamily. As to expression, expressed in roots at low levels.

It localises to the membrane. May be a general defense protein. The sequence is that of ABC transporter G family member 34 (ABCG34) from Arabidopsis thaliana (Mouse-ear cress).